The sequence spans 475 residues: BTB/POZ domain-containing protein 10 (475 aa).

The disordered stretch occupies residues 1–143 (MAGRPHPYDG…SSQSSSDGSC (143 aa)). Positions 22 to 31 (LHSRPRKLYK) are enriched in basic residues. The segment covering 57–80 (GHERSRDRRRSSDRSRDSSHERTE) has biased composition (basic and acidic residues). Positions 81–94 (SQLTPCIRNVTSPT) are enriched in polar residues. Basic and acidic residues predominate over residues 97 to 107 (HHVEREKDHSS). Residues 108 to 142 (SRPSSPRPQKASPNGSISSAGNSSRNSSQSSSDGS) are compositionally biased toward low complexity. The interval 146–475 (AGEMVFVYEN…LDPDAQNPTL (330 aa)) is interaction with AKT family members. The BTB domain maps to 167-241 (ERVTLIVDNT…YKTGIIRCPD (75 aa)). Residues 456–475 (PIHPPSGNSDLDPDAQNPTL) form a disordered region.

As to quaternary structure, interacts (via C-terminal 330-amino-acid region) with AKT1; AKT2 and AKT3. Interacts with PPP2CA and PPP1CA.

Its subcellular location is the nucleus. The protein resides in the cytoplasm. Plays a major role as an activator of AKT family members by inhibiting PPP2CA-mediated dephosphorylation, thereby keeping AKTs activated. Plays a role in preventing motor neuronal death and in accelerating the growth of pancreatic beta cells. The chain is BTB/POZ domain-containing protein 10 (BTBD10) from Pongo abelii (Sumatran orangutan).